Reading from the N-terminus, the 428-residue chain is Maltoporin (428 aa).

Residues Met1–Ala21 form the signal peptide.

It belongs to the porin LamB (TC 1.B.3) family. Homotrimer formed of three 18-stranded antiparallel beta-barrels, containing three independent channels.

The protein localises to the cell outer membrane. It catalyses the reaction beta-maltose(in) = beta-maltose(out). Functionally, involved in the transport of maltose and maltodextrins. The sequence is that of Maltoporin from Mannheimia succiniciproducens (strain KCTC 0769BP / MBEL55E).